Consider the following 426-residue polypeptide: Serine/threonine-protein kinase ssn3 (426 aa).

Positions 41 to 368 (YHIVGFISSG…AREALEHPYF (328 aa)) constitute a Protein kinase domain. ATP-binding positions include 47-55 (ISSGTYGRV) and K71. D173 serves as the catalytic Proton acceptor. The tract at residues 390-426 (RVTQDDNDIRSGSLPGTKRSGLPDDSLMGRAAKRLKE) is disordered.

The protein belongs to the protein kinase superfamily. CMGC Ser/Thr protein kinase family. CDC2/CDKX subfamily. In terms of assembly, component of the srb8-11 complex, a regulatory module of the Mediator complex. Requires Mg(2+) as cofactor.

It localises to the nucleus. The enzyme catalyses L-seryl-[protein] + ATP = O-phospho-L-seryl-[protein] + ADP + H(+). It carries out the reaction L-threonyl-[protein] + ATP = O-phospho-L-threonyl-[protein] + ADP + H(+). It catalyses the reaction [DNA-directed RNA polymerase] + ATP = phospho-[DNA-directed RNA polymerase] + ADP + H(+). Functionally, component of the srb8-11 complex. The srb8-11 complex is a regulatory module of the Mediator complex which is itself dependent transcription. The srb8-11 complex may be involved in the transcriptional repression of a subset of genes regulated by Mediator. It may inhibit the association of the Mediator complex with RNA polymerase II to form the holoenzyme complex. The srb8-11 complex phosphorylates the C-terminal domain (CTD) of the largest subunit of RNA polymerase II. In Neosartorya fischeri (strain ATCC 1020 / DSM 3700 / CBS 544.65 / FGSC A1164 / JCM 1740 / NRRL 181 / WB 181) (Aspergillus fischerianus), this protein is Serine/threonine-protein kinase ssn3 (ssn3).